Here is a 522-residue protein sequence, read N- to C-terminus: Probable protein kinase UbiB (522 aa).

One can recognise a Protein kinase domain in the interval 119-497 (SFERVPVASA…QRRTNRLLQS (379 aa)). Residues 125–133 (VASASIAQV) and K151 contribute to the ATP site. Residue D286 is the Proton acceptor of the active site. The helical transmembrane segment at 496-516 (QSIIYGGMGFVLGLLALQFLI) threads the bilayer.

It belongs to the ABC1 family. UbiB subfamily.

The protein resides in the cell inner membrane. It functions in the pathway cofactor biosynthesis; ubiquinone biosynthesis [regulation]. Its function is as follows. Is probably a protein kinase regulator of UbiI activity which is involved in aerobic coenzyme Q (ubiquinone) biosynthesis. The sequence is that of Probable protein kinase UbiB from Paracidovorax citrulli (strain AAC00-1) (Acidovorax citrulli).